Here is a 233-residue protein sequence, read N- to C-terminus: uncharacterized protein (233 aa).

Residues 16 to 84 enclose the HTH gntR-type domain; sequence KTLAKQVIER…TRGGTYFNDK (69 aa). Positions 44-63 form a DNA-binding region, H-T-H motif; it reads EMELMDILHVSRPVLREALS.

This is an uncharacterized protein from Bacillus subtilis (strain 168).